A 336-amino-acid polypeptide reads, in one-letter code: Phosphate acyltransferase (336 aa).

This sequence belongs to the PlsX family. As to quaternary structure, homodimer. Probably interacts with PlsY.

The protein resides in the cytoplasm. It catalyses the reaction a fatty acyl-[ACP] + phosphate = an acyl phosphate + holo-[ACP]. It participates in lipid metabolism; phospholipid metabolism. Its function is as follows. Catalyzes the reversible formation of acyl-phosphate (acyl-PO(4)) from acyl-[acyl-carrier-protein] (acyl-ACP). This enzyme utilizes acyl-ACP as fatty acyl donor, but not acyl-CoA. The sequence is that of Phosphate acyltransferase from Pseudomonas putida (strain GB-1).